The following is a 543-amino-acid chain: MAHAHIQGGRRAKSRFVVCIMSGARSKLALFLCGCYVVALGAHTGEESVADHHEAEYYVAAVYEHPSILSLNPLALISRQEALELMNQNLDIYEQQVMTAAQKDVQIIVFPEDGIHGFNFTRTSIYPFLDFMPSPQVVRWNPCLEPHRFNDTEVLQRLSCMAIRGDMFLVANLGTKEPCHSSDPRCPKDGRYQFNTNVVFSNNGTLVDRYRKHNLYFEAAFDVPLKVDLITFDTPFAGRFGIFTCFDILFFDPAIRVLRDYKVKHVVYPTAWMNQLPLLAAIEIQKAFAVAFGINVLAANVHHPVLGMTGSGIHTPLESFWYHDMENPKSHLIIAQVAKNPVGLIGAENATGETDPSHSKFLKILSGDPYCEKDAQEVHCDEATKWNVNAPPTFHSEMMYDNFTLVPVWGKEGYLHVCSNGLCCYLLYERPTLSKELYALGVFDGLHTVHGTYYIQVCALVRCGGLGFDTCGQEITEATGIFEFHLWGNFSTSYIFPLFLTSGMTLEVPDQLGWENDHYFLRKSRLSSGLVTAALYGRLYERD.

Residues 1-41 (MAHAHIQGGRRAKSRFVVCIMSGARSKLALFLCGCYVVALG) form the signal peptide. The CN hydrolase domain occupies 72–351 (NPLALISRQE…VGLIGAENAT (280 aa)). The Proton acceptor role is filled by glutamate 112. The N-linked (GlcNAc...) asparagine glycan is linked to asparagine 119. N-linked (GlcNAc...) (complex) asparagine glycosylation is present at asparagine 150. N-linked (GlcNAc...) asparagine glycosylation is present at asparagine 203. Catalysis depends on lysine 212, which acts as the Proton donor. Catalysis depends on cysteine 245, which acts as the Nucleophile. 3 N-linked (GlcNAc...) asparagine glycosylation sites follow: asparagine 349, asparagine 402, and asparagine 489.

It belongs to the carbon-nitrogen hydrolase superfamily. BTD/VNN family.

Its subcellular location is the secreted. It localises to the extracellular space. It carries out the reaction biocytin + H2O = biotin + L-lysine. The enzyme catalyses biotin amide + H2O = biotin + NH4(+). Its function is as follows. Catalytic release of biotin from biocytin, the product of biotin-dependent carboxylases degradation. The polypeptide is Biotinidase (Homo sapiens (Human)).